Reading from the N-terminus, the 431-residue chain is Enolase (431 aa).

Residue Gln163 coordinates (2R)-2-phosphoglycerate. The Proton donor role is filled by Glu205. Asp242, Glu288, and Asp315 together coordinate Mg(2+). Residues Lys340, Arg369, Ser370, and Lys391 each coordinate (2R)-2-phosphoglycerate. The active-site Proton acceptor is Lys340.

The protein belongs to the enolase family. The cofactor is Mg(2+).

It localises to the cytoplasm. The protein resides in the secreted. It is found in the cell surface. The catalysed reaction is (2R)-2-phosphoglycerate = phosphoenolpyruvate + H2O. The protein operates within carbohydrate degradation; glycolysis; pyruvate from D-glyceraldehyde 3-phosphate: step 4/5. Its function is as follows. Catalyzes the reversible conversion of 2-phosphoglycerate (2-PG) into phosphoenolpyruvate (PEP). It is essential for the degradation of carbohydrates via glycolysis. The chain is Enolase from Bacillus cereus (strain G9842).